A 479-amino-acid polypeptide reads, in one-letter code: Poly(A) polymerase catalytic subunit (479 aa).

Residues Asp-202 and Asp-204 contribute to the active site. Asp-202, Asp-204, and Asp-253 together coordinate Ca(2+).

The protein belongs to the poxviridae poly(A) polymerase catalytic subunit family. In terms of assembly, heterodimer of a large (catalytic) subunit and a small (regulatory) subunit.

It carries out the reaction RNA(n) + ATP = RNA(n)-3'-adenine ribonucleotide + diphosphate. Polymerase that creates the 3'-poly(A) tail of mRNA's. In Cynomys gunnisoni (Gunnison's prairie dog), this protein is Poly(A) polymerase catalytic subunit (OPG063).